A 163-amino-acid polypeptide reads, in one-letter code: Phosphopantetheine adenylyltransferase (163 aa).

Position 8 (S8) interacts with substrate. Residues S8 to F9 and H16 each bind ATP. 3 residues coordinate substrate: K40, T72, and R86. Residues G87 to R89, E97, and H122 to S128 contribute to the ATP site.

Belongs to the bacterial CoaD family. In terms of assembly, homohexamer. Mg(2+) is required as a cofactor.

It is found in the cytoplasm. The enzyme catalyses (R)-4'-phosphopantetheine + ATP + H(+) = 3'-dephospho-CoA + diphosphate. It participates in cofactor biosynthesis; coenzyme A biosynthesis; CoA from (R)-pantothenate: step 4/5. In terms of biological role, reversibly transfers an adenylyl group from ATP to 4'-phosphopantetheine, yielding dephospho-CoA (dPCoA) and pyrophosphate. The chain is Phosphopantetheine adenylyltransferase from Parasynechococcus marenigrum (strain WH8102).